Reading from the N-terminus, the 290-residue chain is uncharacterized protein (290 aa).

Transmembrane regions (helical) follow at residues 40–60 (MHVILLSALFYQIINILSPVI), 80–100 (DAHVVSSVQSIVLICLGYTCL), 110–130 (LFGYSVVAGDIYALTAGYFVW), 139–159 (VHITGIGFVIHAIAALFVITF), 166–188 (MYYGPTYLSWELSTPFLNIHYFL), 200–220 (MINGFILIVTFICVRIAWGWF), and 238–260 (WALSLFYLAANMSLNCLNLFWVS). One can recognise a TLC domain in the interval 74–271 (KTRLNWDAHV…MIDAIRRRAH (198 aa)).

The protein localises to the endoplasmic reticulum membrane. This is an uncharacterized protein from Schizosaccharomyces pombe (strain 972 / ATCC 24843) (Fission yeast).